The sequence spans 525 residues: GMP synthase [glutamine-hydrolyzing] (525 aa).

One can recognise a Glutamine amidotransferase type-1 domain in the interval Arg-9 to Leu-207. Residue Cys-86 is the Nucleophile of the active site. Active-site residues include His-181 and Glu-183. The region spanning Trp-208–Arg-400 is the GMPS ATP-PPase domain. Ser-235–Ser-241 is a binding site for ATP.

In terms of assembly, homodimer.

The enzyme catalyses XMP + L-glutamine + ATP + H2O = GMP + L-glutamate + AMP + diphosphate + 2 H(+). Its pathway is purine metabolism; GMP biosynthesis; GMP from XMP (L-Gln route): step 1/1. Functionally, catalyzes the synthesis of GMP from XMP. The sequence is that of GMP synthase [glutamine-hydrolyzing] from Salmonella typhimurium (strain LT2 / SGSC1412 / ATCC 700720).